A 549-amino-acid polypeptide reads, in one-letter code: Glucose-6-phosphate isomerase (549 aa).

Glutamate 353 (proton donor) is an active-site residue. Residues histidine 384 and lysine 513 contribute to the active site.

Belongs to the GPI family.

It is found in the cytoplasm. It carries out the reaction alpha-D-glucose 6-phosphate = beta-D-fructose 6-phosphate. It functions in the pathway carbohydrate biosynthesis; gluconeogenesis. The protein operates within carbohydrate degradation; glycolysis; D-glyceraldehyde 3-phosphate and glycerone phosphate from D-glucose: step 2/4. Catalyzes the reversible isomerization of glucose-6-phosphate to fructose-6-phosphate. In Bartonella bacilliformis (strain ATCC 35685 / KC583 / Herrer 020/F12,63), this protein is Glucose-6-phosphate isomerase.